The primary structure comprises 274 residues: MAIHLYKTSTPSTRNGAVDSQVKSNPRNNLIYGQHRCGKGRNARGIITARHRGGGHKRLYRKIDFRRNAKDIYGRIVTIEYDPNRNAYICLIHYGDGEKRYILHPRGAIIGDTIVSGTEVPIKMGNALPLTDMPLGTAIHNIEITLGKGGQLARAAGAVAKLIAKEGKSATIKLPSGEVRLISKNCSATVGQVGNVGVNQKSLGRAGSKCWLGKRPVVRGVVMNPVDHPHGGGEGRAPIGRKKPATPWGYPALGRRTRKRKKYSETLILRRRSK.

Disordered stretches follow at residues 1 to 25 (MAIHLYKTSTPSTRNGAVDSQVKSN) and 224 to 274 (NPVD…RRSK).

Belongs to the universal ribosomal protein uL2 family. Part of the 50S ribosomal subunit.

It is found in the plastid. The protein localises to the chloroplast. In Aethionema cordifolium (Lebanon stonecress), this protein is Large ribosomal subunit protein uL2cz/uL2cy (rpl2-A).